Here is a 344-residue protein sequence, read N- to C-terminus: DNA-directed RNA polymerase subunit alpha (344 aa).

Positions 1-238 (MKVIKTAPLI…KQLGVFGERP (238 aa)) are alpha N-terminal domain (alpha-NTD). An alpha C-terminal domain (alpha-CTD) region spans residues 253 to 344 (DAKDLSAKIE…EKLEDKGGND (92 aa)).

This sequence belongs to the RNA polymerase alpha chain family. As to quaternary structure, homodimer. The RNAP catalytic core consists of 2 alpha, 1 beta, 1 beta' and 1 omega subunit. When a sigma factor is associated with the core the holoenzyme is formed, which can initiate transcription.

It catalyses the reaction RNA(n) + a ribonucleoside 5'-triphosphate = RNA(n+1) + diphosphate. In terms of biological role, DNA-dependent RNA polymerase catalyzes the transcription of DNA into RNA using the four ribonucleoside triphosphates as substrates. The protein is DNA-directed RNA polymerase subunit alpha of Helicobacter pylori (strain HPAG1).